A 355-amino-acid chain; its full sequence is UDP-N-acetylglucosamine--N-acetylmuramyl-(pentapeptide) pyrophosphoryl-undecaprenol N-acetylglucosamine transferase (355 aa).

UDP-N-acetyl-alpha-D-glucosamine-binding positions include 11 to 13 (TGG), Asn-123, Arg-162, Ser-185, Ile-239, 258 to 263 (ALTVSE), and Gln-284.

Belongs to the glycosyltransferase 28 family. MurG subfamily.

It is found in the cell inner membrane. The catalysed reaction is di-trans,octa-cis-undecaprenyl diphospho-N-acetyl-alpha-D-muramoyl-L-alanyl-D-glutamyl-meso-2,6-diaminopimeloyl-D-alanyl-D-alanine + UDP-N-acetyl-alpha-D-glucosamine = di-trans,octa-cis-undecaprenyl diphospho-[N-acetyl-alpha-D-glucosaminyl-(1-&gt;4)]-N-acetyl-alpha-D-muramoyl-L-alanyl-D-glutamyl-meso-2,6-diaminopimeloyl-D-alanyl-D-alanine + UDP + H(+). It functions in the pathway cell wall biogenesis; peptidoglycan biosynthesis. Cell wall formation. Catalyzes the transfer of a GlcNAc subunit on undecaprenyl-pyrophosphoryl-MurNAc-pentapeptide (lipid intermediate I) to form undecaprenyl-pyrophosphoryl-MurNAc-(pentapeptide)GlcNAc (lipid intermediate II). The sequence is that of UDP-N-acetylglucosamine--N-acetylmuramyl-(pentapeptide) pyrophosphoryl-undecaprenol N-acetylglucosamine transferase from Hydrogenovibrio crunogenus (strain DSM 25203 / XCL-2) (Thiomicrospira crunogena).